Consider the following 314-residue polypeptide: Basic endochitinase (314 aa).

The first 20 residues, 1-20 (MGLWALVAFCLLSLILVGSA), serve as a signal peptide directing secretion. One can recognise a Chitin-binding type-1 domain in the interval 21 to 61 (EQCGGQAGGRVCPGGACCSKFGWCGNTADYCGSGCQSQCSS). Disulfide bonds link Cys-23-Cys-38, Cys-32-Cys-44, Cys-37-Cys-51, Cys-55-Cys-59, Cys-86-Cys-148, Cys-160-Cys-168, and Cys-267-Cys-299. Catalysis depends on Glu-130, which acts as the Proton donor.

Belongs to the glycosyl hydrolase 19 family. Chitinase class I subfamily.

It carries out the reaction Random endo-hydrolysis of N-acetyl-beta-D-glucosaminide (1-&gt;4)-beta-linkages in chitin and chitodextrins.. In terms of biological role, defense against chitin-containing fungal pathogens. This Vitis vinifera (Grape) protein is Basic endochitinase (CHIT1B).